The sequence spans 130 residues: Small ribosomal subunit protein uS9 (130 aa).

This sequence belongs to the universal ribosomal protein uS9 family.

This Xanthomonas oryzae pv. oryzae (strain MAFF 311018) protein is Small ribosomal subunit protein uS9.